The chain runs to 498 residues: Cytochrome c-552 (498 aa).

A signal peptide spans 1–31 (MKNKERKLKSWQGWLIFSSSMVVVFCLGLLA). Position 119 (histidine 119) interacts with heme c. Heme is bound by residues cysteine 148, cysteine 151, and lysine 152. Heme c is bound by residues cysteine 186, cysteine 189, histidine 190, cysteine 228, cysteine 231, and histidine 232. Ca(2+)-binding residues include glutamate 234, tyrosine 235, lysine 280, and glutamine 282. Tyrosine 235 contributes to the substrate binding site. Histidine 283 is a binding site for substrate. Histidine 294, cysteine 301, cysteine 304, histidine 305, histidine 319, cysteine 332, cysteine 335, histidine 336, and histidine 411 together coordinate heme c.

Belongs to the cytochrome c-552 family. Ca(2+) is required as a cofactor. The cofactor is heme c.

The protein localises to the periplasm. The catalysed reaction is 6 Fe(III)-[cytochrome c] + NH4(+) + 2 H2O = 6 Fe(II)-[cytochrome c] + nitrite + 8 H(+). The protein operates within nitrogen metabolism; nitrate reduction (assimilation). Catalyzes the reduction of nitrite to ammonia, consuming six electrons in the process. The chain is Cytochrome c-552 from Porphyromonas gingivalis (strain ATCC BAA-308 / W83).